The following is a 184-amino-acid chain: Peptide deformylase (184 aa).

Positions 92 and 134 each coordinate Fe cation. Residue glutamate 135 is part of the active site. Residue histidine 138 coordinates Fe cation.

This sequence belongs to the polypeptide deformylase family. The cofactor is Fe(2+).

It carries out the reaction N-terminal N-formyl-L-methionyl-[peptide] + H2O = N-terminal L-methionyl-[peptide] + formate. Functionally, removes the formyl group from the N-terminal Met of newly synthesized proteins. Requires at least a dipeptide for an efficient rate of reaction. N-terminal L-methionine is a prerequisite for activity but the enzyme has broad specificity at other positions. This Psychrobacter arcticus (strain DSM 17307 / VKM B-2377 / 273-4) protein is Peptide deformylase.